The sequence spans 384 residues: UPF0284 protein alr0297 (384 aa).

Belongs to the UPF0284 family.

The chain is UPF0284 protein alr0297 from Nostoc sp. (strain PCC 7120 / SAG 25.82 / UTEX 2576).